Here is a 324-residue protein sequence, read N- to C-terminus: Phosphate transport system permease protein PstC 2 (324 aa).

6 helical membrane-spanning segments follow: residues 30–50, 90–110, 125–145, 174–194, 237–257, and 290–310; these read ASAA…FLLV, LSSI…AVFL, MVDL…IFVL, AGGG…LPIV, VAAS…VLVI, and PLPT…TFLV. The region spanning 85–314 is the ABC transmembrane type-1 domain; sequence FMVTALSSIT…VLTFLVNAAA (230 aa).

This sequence belongs to the binding-protein-dependent transport system permease family. CysTW subfamily.

Its subcellular location is the cell membrane. Its function is as follows. Part of the binding-protein-dependent transport system for phosphate; probably responsible for the translocation of the substrate across the membrane. In Mycobacterium bovis (strain ATCC BAA-935 / AF2122/97), this protein is Phosphate transport system permease protein PstC 2 (pstC2).